A 175-amino-acid polypeptide reads, in one-letter code: Endoribonuclease YbeY (175 aa).

3 residues coordinate Zn(2+): His-137, His-141, and His-147.

The protein belongs to the endoribonuclease YbeY family. Zn(2+) is required as a cofactor.

It localises to the cytoplasm. In terms of biological role, single strand-specific metallo-endoribonuclease involved in late-stage 70S ribosome quality control and in maturation of the 3' terminus of the 16S rRNA. The sequence is that of Endoribonuclease YbeY from Burkholderia ambifaria (strain ATCC BAA-244 / DSM 16087 / CCUG 44356 / LMG 19182 / AMMD) (Burkholderia cepacia (strain AMMD)).